The sequence spans 89 residues: Small ribosomal subunit protein uS15 (89 aa).

The segment covering 1–11 (MSIAAERKAEV) has biased composition (basic and acidic residues). A disordered region spans residues 1-24 (MSIAAERKAEVIKTNATKAGDTGS).

This sequence belongs to the universal ribosomal protein uS15 family. In terms of assembly, part of the 30S ribosomal subunit. Forms a bridge to the 50S subunit in the 70S ribosome, contacting the 23S rRNA.

Functionally, one of the primary rRNA binding proteins, it binds directly to 16S rRNA where it helps nucleate assembly of the platform of the 30S subunit by binding and bridging several RNA helices of the 16S rRNA. Forms an intersubunit bridge (bridge B4) with the 23S rRNA of the 50S subunit in the ribosome. This chain is Small ribosomal subunit protein uS15, found in Bradyrhizobium diazoefficiens (strain JCM 10833 / BCRC 13528 / IAM 13628 / NBRC 14792 / USDA 110).